The chain runs to 570 residues: Rho GTPase-activating protein gacEE (570 aa).

The region spanning 127–233 (NSDISGVLLK…WVTTINNCID (107 aa)) is the PH domain. One can recognise a C2 domain in the interval 224-343 (WVTTINNCID…PNGSEISLWL (120 aa)). Residues aspartate 260, aspartate 266, aspartate 312, aspartate 314, and aspartate 320 each coordinate Ca(2+). The region spanning 381 to 567 (NSLEAIVKNR…FVFENSQQIL (187 aa)) is the Rho-GAP domain.

Requires Ca(2+) as cofactor.

It is found in the cytoplasm. Rho GTPase-activating protein involved in the signal transduction pathway. The protein is Rho GTPase-activating protein gacEE (gacEE) of Dictyostelium discoideum (Social amoeba).